A 298-amino-acid polypeptide reads, in one-letter code: ATP-dependent Clp protease proteolytic subunit 5, chloroplastic (298 aa).

The N-terminal 100 residues, 1-100 (MAHACVSTSA…SSPYFPAYAQ (100 aa)), are a transit peptide targeting the chloroplast. Residue glycine 101 is modified to N-acetylglycine. The Nucleophile role is filled by serine 193. Residue histidine 218 is part of the active site.

This sequence belongs to the peptidase S14 family. Component of the chloroplastic Clp protease core complex which consist of at least 16 proteins: CLPP4 (3 copies), CLPP5 (3 copies), CLPR4 (2 copies), ClpP1 (1 copy), CLPP6 (1 copy), CLPR2 (1 copy), CLPT1 (1 copy), CLPT2 (1 copy) and 3 copies of CLPP3 and/or CLPR1 and/or CLPR3. The core complex is organized in two heptameric rings, one containing CLPP3,4,5,6 in a 1:2:3:1 ratio and the other CLPP1 and CLPR1,2,3,4 in a 3:1:1:1:1 ratio. Interacts with CHIP. Post-translationally, ubiquitinated in vitro by CHIP. Mostly expressed in leaves. Also detected in stems, and to a lower extent, in roots (at protein level).

Its subcellular location is the plastid. It localises to the chloroplast stroma. The enzyme catalyses Hydrolysis of proteins to small peptides in the presence of ATP and magnesium. alpha-casein is the usual test substrate. In the absence of ATP, only oligopeptides shorter than five residues are hydrolyzed (such as succinyl-Leu-Tyr-|-NHMec, and Leu-Tyr-Leu-|-Tyr-Trp, in which cleavage of the -Tyr-|-Leu- and -Tyr-|-Trp bonds also occurs).. Functionally, cleaves peptides in various proteins in a process that requires ATP hydrolysis. Has a chymotrypsin-like activity. Plays a major role in the degradation of misfolded proteins. This chain is ATP-dependent Clp protease proteolytic subunit 5, chloroplastic, found in Arabidopsis thaliana (Mouse-ear cress).